A 554-amino-acid polypeptide reads, in one-letter code: Aspartyl/glutamyl-tRNA(Asn/Gln) amidotransferase subunit B (554 aa).

A disordered region spans residues 491-554 (AEQPTAPPPE…TPVSHQDAHA (64 aa)). Residues 502 to 540 (ESAAETPEAPPAVEDAPPEAPTEAITAEAGSAEAITAAS) show a composition bias toward low complexity.

The protein belongs to the GatB/GatE family. GatB subfamily. Heterotrimer of A, B and C subunits.

It carries out the reaction L-glutamyl-tRNA(Gln) + L-glutamine + ATP + H2O = L-glutaminyl-tRNA(Gln) + L-glutamate + ADP + phosphate + H(+). The catalysed reaction is L-aspartyl-tRNA(Asn) + L-glutamine + ATP + H2O = L-asparaginyl-tRNA(Asn) + L-glutamate + ADP + phosphate + 2 H(+). Its function is as follows. Allows the formation of correctly charged Asn-tRNA(Asn) or Gln-tRNA(Gln) through the transamidation of misacylated Asp-tRNA(Asn) or Glu-tRNA(Gln) in organisms which lack either or both of asparaginyl-tRNA or glutaminyl-tRNA synthetases. The reaction takes place in the presence of glutamine and ATP through an activated phospho-Asp-tRNA(Asn) or phospho-Glu-tRNA(Gln). The chain is Aspartyl/glutamyl-tRNA(Asn/Gln) amidotransferase subunit B from Gloeobacter violaceus (strain ATCC 29082 / PCC 7421).